The primary structure comprises 267 residues: MTLLEIMRPANCVMAGAASLTGMLVSGALLQSLHTPVLVFSAVLLITGGGNAINDYFDREIDAVNRPDRPIPSGRISPRAALIWSVALFIAGCLIAGLINQSCLALALLNSFVLIIYAARLKGLPVAGNIAISYLTGTTFLFGGLAASPSSITAFLSILSALATLSREIVKDIEDLPGDLAHGAKTLPAFIGKRKSFVLASLVLIVAMLLSYLVPLGIDYQAAVSIANLAFLLSIKRMLCGDASGSQRWIKMGMGMALVAFLIGYHI.

7 helical membrane-spanning segments follow: residues 10 to 30, 33 to 53, 80 to 100, 104 to 121, 139 to 159, 198 to 218, and 247 to 267; these read ANCVMAGAASLTGMLVSGALL, LHTPVLVFSAVLLITGGGNAI, AALIWSVALFIAGCLIAGLIN, LALALLNSFVLIIYAARL, TFLFGGLAASPSSITAFLSIL, VLASLVLIVAMLLSYLVPLGI, and QRWIKMGMGMALVAFLIGYHI.

This sequence belongs to the UbiA prenyltransferase family. DGGGP synthase subfamily. It depends on Mg(2+) as a cofactor.

The protein resides in the cell membrane. It catalyses the reaction sn-3-O-(geranylgeranyl)glycerol 1-phosphate + (2E,6E,10E)-geranylgeranyl diphosphate = 2,3-bis-O-(geranylgeranyl)-sn-glycerol 1-phosphate + diphosphate. It participates in membrane lipid metabolism; glycerophospholipid metabolism. In terms of biological role, prenyltransferase that catalyzes the transfer of the geranylgeranyl moiety of geranylgeranyl diphosphate (GGPP) to the C2 hydroxyl of (S)-3-O-geranylgeranylglyceryl phosphate (GGGP). This reaction is the second ether-bond-formation step in the biosynthesis of archaeal membrane lipids. The polypeptide is Digeranylgeranylglyceryl phosphate synthase (Methanothrix thermoacetophila (strain DSM 6194 / JCM 14653 / NBRC 101360 / PT) (Methanosaeta thermophila)).